The following is a 304-amino-acid chain: Non-specific ribonucleoside hydrolase RihC (304 aa).

The active site involves His-233.

The protein belongs to the IUNH family. RihC subfamily.

Its function is as follows. Hydrolyzes both purine and pyrimidine ribonucleosides with a broad-substrate specificity. This is Non-specific ribonucleoside hydrolase RihC from Escherichia coli O157:H7.